Reading from the N-terminus, the 202-residue chain is Small ribosomal subunit protein uS4c (202 aa).

The region spanning 90–153 (MRLDNVIFRL…KSETIISKNI (64 aa)) is the S4 RNA-binding domain.

Belongs to the universal ribosomal protein uS4 family. As to quaternary structure, part of the 30S ribosomal subunit. Contacts protein S5. The interaction surface between S4 and S5 is involved in control of translational fidelity.

The protein localises to the plastid. It localises to the chloroplast. Functionally, one of the primary rRNA binding proteins, it binds directly to 16S rRNA where it nucleates assembly of the body of the 30S subunit. With S5 and S12 plays an important role in translational accuracy. The sequence is that of Small ribosomal subunit protein uS4c (rps4) from Sphaerocarpos donnelli (Liverwort).